A 298-amino-acid polypeptide reads, in one-letter code: Myozenin-1 (298 aa).

The tract at residues Met1 to Leu34 is disordered. Residue Ser82 is modified to Phosphoserine. The segment at Phe105 to Glu173 is disordered. The segment covering Gly118–Gln129 has biased composition (low complexity). Over residues Ser136–Gly172 the composition is skewed to gly residues.

It belongs to the myozenin family. As to quaternary structure, interacts with ACTN2, ACTN3, FLNA, FLNB, FLNC, LDB3, PPP3CA and TCAP. Interacts via its C-terminal region with MYOT.

The protein resides in the nucleus. It localises to the cell projection. It is found in the pseudopodium. Myozenins may serve as intracellular binding proteins involved in linking Z-disk proteins such as alpha-actinin, gamma-filamin, TCAP/telethonin, LDB3/ZASP and localizing calcineurin signaling to the sarcomere. Plays an important role in the modulation of calcineurin signaling. May play a role in myofibrillogenesis. The sequence is that of Myozenin-1 (MYOZ1) from Sus scrofa (Pig).